The chain runs to 456 residues: Multidrug resistance protein NorM (456 aa).

12 consecutive transmembrane segments (helical) span residues 11 to 31 (LIKL…MGFV), 53 to 73 (IWLP…PVVA), 93 to 113 (VMAL…QWIL), 126 to 146 (TIGY…FQTL), 159 to 179 (AMVI…MFVY), 189 to 209 (GVGC…LLLL), 242 to 262 (FPVA…ALLV), 276 to 296 (AINF…ATSI), 315 to 335 (HVGI…TVIL), 356 to 376 (LLIF…AAGA), 391 to 411 (FIAY…TDWI), and 417 to 437 (AQGF…MLGV).

This sequence belongs to the multi antimicrobial extrusion (MATE) (TC 2.A.66.1) family.

The protein resides in the cell inner membrane. Multidrug efflux pump that functions as a Na(+)/drug antiporter. The chain is Multidrug resistance protein NorM (norM) from Vibrio vulnificus (strain YJ016).